Consider the following 223-residue polypeptide: Phosphoribosylformylglycinamidine synthase subunit PurQ (223 aa).

The 222-residue stretch at 2–223 (KVAIIRFPGT…LLENFINFNF (222 aa)) folds into the Glutamine amidotransferase type-1 domain. The Nucleophile role is filled by cysteine 84. Residues histidine 192 and glutamate 194 contribute to the active site.

Part of the FGAM synthase complex composed of 1 PurL, 1 PurQ and 2 PurS subunits.

It is found in the cytoplasm. It catalyses the reaction N(2)-formyl-N(1)-(5-phospho-beta-D-ribosyl)glycinamide + L-glutamine + ATP + H2O = 2-formamido-N(1)-(5-O-phospho-beta-D-ribosyl)acetamidine + L-glutamate + ADP + phosphate + H(+). It carries out the reaction L-glutamine + H2O = L-glutamate + NH4(+). Its pathway is purine metabolism; IMP biosynthesis via de novo pathway; 5-amino-1-(5-phospho-D-ribosyl)imidazole from N(2)-formyl-N(1)-(5-phospho-D-ribosyl)glycinamide: step 1/2. Its function is as follows. Part of the phosphoribosylformylglycinamidine synthase complex involved in the purines biosynthetic pathway. Catalyzes the ATP-dependent conversion of formylglycinamide ribonucleotide (FGAR) and glutamine to yield formylglycinamidine ribonucleotide (FGAM) and glutamate. The FGAM synthase complex is composed of three subunits. PurQ produces an ammonia molecule by converting glutamine to glutamate. PurL transfers the ammonia molecule to FGAR to form FGAM in an ATP-dependent manner. PurS interacts with PurQ and PurL and is thought to assist in the transfer of the ammonia molecule from PurQ to PurL. The polypeptide is Phosphoribosylformylglycinamidine synthase subunit PurQ (Campylobacter jejuni subsp. jejuni serotype O:2 (strain ATCC 700819 / NCTC 11168)).